The chain runs to 151 residues: Ribosome maturation factor RimP (151 aa).

Belongs to the RimP family.

Its subcellular location is the cytoplasm. Its function is as follows. Required for maturation of 30S ribosomal subunits. The polypeptide is Ribosome maturation factor RimP (Caldanaerobacter subterraneus subsp. tengcongensis (strain DSM 15242 / JCM 11007 / NBRC 100824 / MB4) (Thermoanaerobacter tengcongensis)).